We begin with the raw amino-acid sequence, 200 residues long: Dual specificity tyrosine-phosphorylation-regulated kinase 1A (200 aa).

Position 41 is a phosphotyrosine; by autocatalysis (Tyr-41). Lys-58 contributes to the ATP binding site. Tyr-76 is subject to Phosphotyrosine; by autocatalysis. At Ser-88 the chain carries Phosphoserine; by autocatalysis. Phosphothreonine; by autocatalysis is present on Thr-122.

The protein belongs to the protein kinase superfamily. CMGC Ser/Thr protein kinase family. MNB/DYRK subfamily. Interacts with RAD54L2/ARIP4. Interacts with CRY2. Interacts with RANBP9. Interacts with WDR68. Interacts with SIRT1. Can also autophosphorylate on serine and threonine residues (in vitro). Autophosphorylated on numerous tyrosine residues.

The protein localises to the nucleus. It carries out the reaction L-tyrosyl-[protein] + ATP = O-phospho-L-tyrosyl-[protein] + ADP + H(+). The catalysed reaction is L-seryl-[protein] + ATP = O-phospho-L-seryl-[protein] + ADP + H(+). It catalyses the reaction L-threonyl-[protein] + ATP = O-phospho-L-threonyl-[protein] + ADP + H(+). The enzyme catalyses [DNA-directed RNA polymerase] + ATP = phospho-[DNA-directed RNA polymerase] + ADP + H(+). With respect to regulation, inhibited by RANBP9. In terms of biological role, dual-specificity kinase which possesses both serine/threonine and tyrosine kinase activities. Exhibits a substrate preference for proline at position P+1 and arginine at position P-3. Plays an important role in double-strand breaks (DSBs) repair following DNA damage. Mechanistically, phosphorylates RNF169 and increases its ability to block accumulation of TP53BP1 at the DSB sites thereby promoting homologous recombination repair (HRR). Also acts as a positive regulator of transcription by acting as a CTD kinase that mediates phosphorylation of the CTD (C-terminal domain) of the large subunit of RNA polymerase II (RNAP II) POLR2A. May play a role in a signaling pathway regulating nuclear functions of cell proliferation. Modulates alternative splicing by phosphorylating the splice factor SRSF6. Has pro-survival function and negatively regulates the apoptotic process. Promotes cell survival upon genotoxic stress through phosphorylation of SIRT1. This in turn inhibits p53/TP53 activity and apoptosis. Phosphorylates SEPTIN4, SEPTIN5 and SF3B1 at 'Thr-434'. This chain is Dual specificity tyrosine-phosphorylation-regulated kinase 1A, found in Oryctolagus cuniculus (Rabbit).